The following is a 205-amino-acid chain: Small ribosomal subunit protein uS4 (205 aa).

The interval 18–46 (NIWGRPKSPVNRREYGPGQHGQRRKGKLS) is disordered. The S4 RNA-binding domain maps to 94-154 (RRLDAVVYRA…EASKQLAHVL (61 aa)).

This sequence belongs to the universal ribosomal protein uS4 family. In terms of assembly, part of the 30S ribosomal subunit. Contacts protein S5. The interaction surface between S4 and S5 is involved in control of translational fidelity.

One of the primary rRNA binding proteins, it binds directly to 16S rRNA where it nucleates assembly of the body of the 30S subunit. Its function is as follows. With S5 and S12 plays an important role in translational accuracy. In Bradyrhizobium diazoefficiens (strain JCM 10833 / BCRC 13528 / IAM 13628 / NBRC 14792 / USDA 110), this protein is Small ribosomal subunit protein uS4.